The following is a 379-amino-acid chain: Queuine tRNA-ribosyltransferase (379 aa).

The Proton acceptor role is filled by aspartate 93. Residues 93–97 (DSGGF), aspartate 147, glutamine 191, and glycine 218 contribute to the substrate site. The tract at residues 249-255 (GVGKPED) is RNA binding. Aspartate 268 acts as the Nucleophile in catalysis. The tract at residues 273-277 (TRNAR) is RNA binding; important for wobble base 34 recognition. Zn(2+) is bound by residues cysteine 306, cysteine 308, cysteine 311, and histidine 337.

It belongs to the queuine tRNA-ribosyltransferase family. In terms of assembly, homodimer. Within each dimer, one monomer is responsible for RNA recognition and catalysis, while the other monomer binds to the replacement base PreQ1. Zn(2+) is required as a cofactor.

It catalyses the reaction 7-aminomethyl-7-carbaguanine + guanosine(34) in tRNA = 7-aminomethyl-7-carbaguanosine(34) in tRNA + guanine. The protein operates within tRNA modification; tRNA-queuosine biosynthesis. Catalyzes the base-exchange of a guanine (G) residue with the queuine precursor 7-aminomethyl-7-deazaguanine (PreQ1) at position 34 (anticodon wobble position) in tRNAs with GU(N) anticodons (tRNA-Asp, -Asn, -His and -Tyr). Catalysis occurs through a double-displacement mechanism. The nucleophile active site attacks the C1' of nucleotide 34 to detach the guanine base from the RNA, forming a covalent enzyme-RNA intermediate. The proton acceptor active site deprotonates the incoming PreQ1, allowing a nucleophilic attack on the C1' of the ribose to form the product. After dissociation, two additional enzymatic reactions on the tRNA convert PreQ1 to queuine (Q), resulting in the hypermodified nucleoside queuosine (7-(((4,5-cis-dihydroxy-2-cyclopenten-1-yl)amino)methyl)-7-deazaguanosine). The protein is Queuine tRNA-ribosyltransferase of Mannheimia succiniciproducens (strain KCTC 0769BP / MBEL55E).